The following is a 236-amino-acid chain: Peroxisomal membrane protein 11D (236 aa).

Position 2 is an N-acetylglycine (Gly2). Residues 2-92 are Cytoplasmic-facing; sequence GTTLDVSRAE…LPLVLLGKSK (91 aa). A helical membrane pass occupies residues 93 to 109; sequence NALLSTFLFLDQIVWLG. At 110–207 the chain is on the lumenal side; the sequence is RSGIYKNKER…LLQLAPTKIT (98 aa). A helical membrane pass occupies residues 208–227; that stretch reads PRVTGAFGFITSIISCYQLL. Topologically, residues 228-236 are cytoplasmic; that stretch reads PTRPKIKTP.

The protein belongs to the peroxin-11 family. In terms of assembly, homooligomer. Interacts with ARC5 and FIS1B on peroxisomes. In terms of tissue distribution, expressed in developing siliques.

It is found in the peroxisome membrane. Its function is as follows. Involved in peroxisomal proliferation. Promotes peroxisomal duplication, aggregation or elongation without fission. The chain is Peroxisomal membrane protein 11D (PEX11D) from Arabidopsis thaliana (Mouse-ear cress).